Reading from the N-terminus, the 426-residue chain is Glutamate-1-semialdehyde 2,1-aminomutase (426 aa).

Position 265 is an N6-(pyridoxal phosphate)lysine (Lys265).

This sequence belongs to the class-III pyridoxal-phosphate-dependent aminotransferase family. HemL subfamily. As to quaternary structure, homodimer. Requires pyridoxal 5'-phosphate as cofactor.

The protein localises to the cytoplasm. The catalysed reaction is (S)-4-amino-5-oxopentanoate = 5-aminolevulinate. It participates in porphyrin-containing compound metabolism; protoporphyrin-IX biosynthesis; 5-aminolevulinate from L-glutamyl-tRNA(Glu): step 2/2. In Salmonella paratyphi A (strain ATCC 9150 / SARB42), this protein is Glutamate-1-semialdehyde 2,1-aminomutase.